Consider the following 83-residue polypeptide: Large ribosomal subunit protein bL27 (83 aa).

The tract at residues 1–22 (MAHKKGQGSTRNGRDSHSKRLG) is disordered.

The protein belongs to the bacterial ribosomal protein bL27 family.

This chain is Large ribosomal subunit protein bL27, found in Protochlamydia amoebophila (strain UWE25).